Consider the following 131-residue polypeptide: Histone H2A-beta (131 aa).

The residue at position 2 (S2) is an N-acetylserine. N6-acetyllysine occurs at positions 5 and 9. An N5-methylglutamine modification is found at Q106. S128 is modified (phosphoserine). Positions 128–129 match the [ST]-Q motif motif; it reads SQ.

This sequence belongs to the histone H2A family. The nucleosome is a histone octamer containing two molecules each of H2A, H2B, H3 and H4 assembled in one H3-H4 heterotetramer and two H2A-H2B heterodimers. The octamer wraps approximately 147 bp of DNA. In terms of processing, phosphorylated to form H2AS128ph (gamma-H2A) in response to DNA double-strand breaks (DSBs) generated by exogenous genotoxic agents and by stalled replication forks. Phosphorylation is dependent on the DNA damage checkpoint kinases rad3/ATR and tel1/ATM, spreads on either side of a detected DSB site and may mark the surrounding chromatin for recruitment of proteins required for DNA damage signaling and repair. Gamma-H2A is required for recruiting crb2, a modulator of DNA damage checkpoint signaling, to DSB sites. Gamma-H2A is removed from the DNA prior to the strand invasion-primer extension step of the repair process and subsequently dephosphorylated. Dephosphorylation is necessary for efficient recovery from the DNA damage checkpoint. Acetylated by esa1 to form H2AK4ac and H2AK7ac.

It is found in the nucleus. The protein localises to the chromosome. Its function is as follows. Core component of nucleosome which plays a central role in DNA double strand break (DSB) repair. Nucleosomes wrap and compact DNA into chromatin, limiting DNA accessibility to the cellular machineries which require DNA as a template. Histones thereby play a central role in transcription regulation, DNA repair, DNA replication and chromosomal stability. DNA accessibility is regulated via a complex set of post-translational modifications of histones, also called histone code, and nucleosome remodeling. This is Histone H2A-beta (hta2) from Schizosaccharomyces pombe (strain 972 / ATCC 24843) (Fission yeast).